A 274-amino-acid polypeptide reads, in one-letter code: Transcription factor MYB58 (274 aa).

HTH myb-type domains lie at 11 to 63 (KTKV…INYL) and 64 to 118 (RPDV…KKRL). 2 DNA-binding regions (H-T-H motif) span residues 39 to 63 (WRSLPKQAGLLRCGKSCRLRWINYL) and 91 to 114 (WSKIASKLPGRTDNEIKNVWHTHL). 2 disordered regions span residues 121-160 (ETNLNADEAGSKGSLNEEENSQESSPNASMSFAGSNISSK) and 237-274 (SELGLEENDNQQQQQQHKQGTEDEHSSSLLESYELLIH). Over residues 263 to 274 (SSLLESYELLIH) the composition is skewed to low complexity.

As to expression, expressed in leaves. Specifically expressed in fibers and vessels undergoing secondary wall thickening, especially in inflorescence stems.

The protein localises to the nucleus. Transcriptional activator that binds DNA to the AC cis-elements 5'-ACCTACC-3', 5'-ACCAACC-3' and 5'-ACCTAAC-3' of promoters and specifically activates lignin biosynthetic genes during secondary wall formation mediated by SND1. This Arabidopsis thaliana (Mouse-ear cress) protein is Transcription factor MYB58.